The following is a 59-amino-acid chain: Gallinacin-14 (59 aa).

A signal peptide spans 1 to 18; that stretch reads MGIFLLFLVLLAVPQAAP. Disulfide bonds link cysteine 25–cysteine 54, cysteine 32–cysteine 47, and cysteine 37–cysteine 55.

The protein belongs to the beta-defensin family.

The protein resides in the secreted. Its subcellular location is the cytoplasmic granule. Its function is as follows. Has bactericidal activity. This is Gallinacin-14 (GAL14) from Gallus gallus (Chicken).